The chain runs to 339 residues: MTEYTPKERLYRALRKQPVDRMPAVCFTQTATVEQMEASGAYWPEAHADAEKMATLAEAGHTVIGFEAVRVPFDITAEAELFGCGIKAGDLKQQPSVIKHVVKNMEDMEKLKGYSLNEGRVGLILEAIKILSEKYGKELPIIGSMIGPFSLAQHINGDAWFGNLFTGEEIVPALLDFCSDFNVAYAKAMVENGADTIAIIDPTASYELIGGEFYEKYALPYQKKIVDAMKELDVGTVLHICGNTTNGLSIMDKTGVNGISVDQRVDIKTATDNVENAIIIGNLDPVAILWNGTPEDVAEASKKVLDVGVGLLSPGCGIVSMTPSANLQKMVECAKNYKY.

Residues His239, Cys241, and Cys316 each coordinate Zn(2+).

The protein belongs to the uroporphyrinogen decarboxylase family. MtbA/MtaA subfamily. Requires Zn(2+) as cofactor.

The enzyme catalyses methyl-Co(III)-[methylamine-specific corrinoid protein] + coenzyme M = Co(I)-[methylamine-specific corrinoid protein] + methyl-coenzyme M + H(+). The protein operates within one-carbon metabolism; methanogenesis from methylated amine. In terms of biological role, methyltransferase involved in methanogenesis from methylamines methanol pathway. Catalyzes the transfer of the methyl group from the methylated corrinoid protein MtmC (MtmC1 or MtmC2) to coenzyme M, forming the substrate for coenzyme-B sulfoethylthiotransferase. This is Methylcobamide:CoM methyltransferase MtbA (mtbA) from Methanosarcina acetivorans (strain ATCC 35395 / DSM 2834 / JCM 12185 / C2A).